Consider the following 825-residue polypeptide: Trimethylamine-N-oxide reductase (825 aa).

Residues 1 to 40 (MKKNNVNEQRRDFLKKTSLGVAGSALSGGMVGVVSKSAVA) constitute a signal peptide (tat-type signal). Ser-187 provides a ligand contact to Mo-bis(molybdopterin guanine dinucleotide).

It belongs to the prokaryotic molybdopterin-containing oxidoreductase family. Mo-bis(molybdopterin guanine dinucleotide) is required as a cofactor. Post-translationally, predicted to be exported by the Tat system. The position of the signal peptide cleavage has not been experimentally proven.

It is found in the periplasm. The enzyme catalyses trimethylamine + 2 Fe(III)-[cytochrome c] + H2O = trimethylamine N-oxide + 2 Fe(II)-[cytochrome c] + 3 H(+). Its function is as follows. Reduces trimethylamine-N-oxide (TMAO) into trimethylamine; an anaerobic reaction coupled to energy-yielding reactions. In Haemophilus influenzae (strain ATCC 51907 / DSM 11121 / KW20 / Rd), this protein is Trimethylamine-N-oxide reductase (torZ).